A 642-amino-acid polypeptide reads, in one-letter code: RNA polymerase sigma factor RpoD (642 aa).

The segment at histidine 199–glutamate 228 is disordered. The segment covering asparagine 212 to glutamate 228 has biased composition (acidic residues). The sigma-70 factor domain-2 stretch occupies residues methionine 403–threonine 473. The short motif at aspartate 427–glutamine 430 is the Interaction with polymerase core subunit RpoC element. Residues glutamate 482–alanine 558 form a sigma-70 factor domain-3 region. The tract at residues isoleucine 571–histidine 624 is sigma-70 factor domain-4. The segment at residues leucine 597–alanine 616 is a DNA-binding region (H-T-H motif).

Belongs to the sigma-70 factor family. RpoD/SigA subfamily. Interacts transiently with the RNA polymerase catalytic core.

Its subcellular location is the cytoplasm. Sigma factors are initiation factors that promote the attachment of RNA polymerase to specific initiation sites and are then released. This sigma factor is the primary sigma factor during exponential growth. This chain is RNA polymerase sigma factor RpoD, found in Neisseria gonorrhoeae.